The sequence spans 66 residues: Large ribosomal subunit protein uL29 (66 aa).

This sequence belongs to the universal ribosomal protein uL29 family.

This is Large ribosomal subunit protein uL29 from Borreliella burgdorferi (strain ZS7) (Borrelia burgdorferi).